The chain runs to 536 residues: MEMFGVHNPATELATVGLGGAASVRYNFSAAALYEESIRRGEAELTAQGALRAITGQHTGRSPRDKFVVRDSNTDGEIWWDNNKPLSPEHFALLRADMLAHAAGKDLFVQDLIGGAEEGHALPTRVVTEFAWHSLFIRNLLIRPDAAALPSFAPKLTIIDLPSFKADPARHGCRSETVIACDLTNGLVLIGGTSYAGEMKKSVFTVLNYLLPAKGVMPMHCSANVGPNGDAAVFFGLSGTGKTTLSADPARTLIGDDEHGWSENGIFNFEGGCYAKTIRLSAEAEPEIYATTQRFGTVLENVVLNERREPNFDDGSLTENTRCAYPMDFIPNASETGRAGHPKTIIMLTADAFGVMPPIARLTPDQAMYHFLSGYTAKVAGTEKGVVEPEATFSTCFGAPFMPRHPAEYGNLLKELISRHGVECWLVNTGWTGGAYGTGKRMPIKATRALLAAALTGELGQVEFRADTNFGFAVPVSVNGVDSSILDPRSTWADKAAYDAQAEKLVSMFIANFAKFEGHVDGGVRDAAPGVKVAAE.

The substrate site is built by R61, Y195, and K201. ATP-binding positions include K201, H220, and 236–244 (GLSGTGKTT). Positions 201 and 220 each coordinate Mn(2+). D257 lines the Mn(2+) pocket. ATP-binding residues include E285, R322, and T447. Residue R322 coordinates substrate.

This sequence belongs to the phosphoenolpyruvate carboxykinase (ATP) family. Mn(2+) serves as cofactor.

The protein resides in the cytoplasm. The catalysed reaction is oxaloacetate + ATP = phosphoenolpyruvate + ADP + CO2. Its pathway is carbohydrate biosynthesis; gluconeogenesis. Functionally, involved in the gluconeogenesis. Catalyzes the conversion of oxaloacetate (OAA) to phosphoenolpyruvate (PEP) through direct phosphoryl transfer between the nucleoside triphosphate and OAA. This is Phosphoenolpyruvate carboxykinase (ATP) from Rhizobium leguminosarum bv. trifolii (strain WSM2304).